A 772-amino-acid polypeptide reads, in one-letter code: Semaphorin-3A (772 aa).

The signal sequence occupies residues methionine 1–alanine 20. Residues arginine 31–leucine 514 form the Sema domain. Residue asparagine 53 is glycosylated (N-linked (GlcNAc...) asparagine). Residues cysteine 103 and cysteine 114 are joined by a disulfide bond. N-linked (GlcNAc...) asparagine glycosylation occurs at asparagine 125. 4 disulfides stabilise this stretch: cysteine 132-cysteine 141, cysteine 269-cysteine 381, cysteine 293-cysteine 341, and cysteine 517-cysteine 535. Residues proline 579–threonine 665 form the Ig-like C2-type domain. An N-linked (GlcNAc...) asparagine glycan is attached at asparagine 591. A disulfide bridge links cysteine 650 with cysteine 723. Over residues arginine 729 to proline 738 the composition is skewed to basic residues. Positions arginine 729 to valine 772 are disordered. Residues histidine 750 to valine 772 are compositionally biased toward basic and acidic residues.

Belongs to the semaphorin family. Interacts with PXND1.

The protein resides in the secreted. In terms of biological role, plays a role in growth cones guidance. May function to pattern sensory projections by selectively repelling axons that normally terminate dorsally. Involved in the development of the olfactory system and in neuronal control of puberty. The protein is Semaphorin-3A (Sema3a) of Mus musculus (Mouse).